The sequence spans 359 residues: CCAAT/enhancer-binding protein alpha (359 aa).

The tract at residues 1–55 (MESADFYEVEPRPPMSSHLQSPPHAPSNAAFGFPRGAGPAPPPAPPAAPEPLGGI) is disordered. The tract at residues 1–70 (MESADFYEVE…SIDISAYIDP (70 aa)) is required to repress E2F1:TFDP1-mediated transcription, to inhibit cell cycle and to induce adipocyte differentiation. The segment covering 29–38 (AAFGFPRGAG) has biased composition (low complexity). Residues 39 to 49 (PAPPPAPPAAP) are compositionally biased toward pro residues. Positions 54–72 (GICEHETSIDISAYIDPAA) are required for interaction with TRIB1. The interval 126–200 (PPGYGCAAAG…HASPAHLAAP (75 aa)) is required to induce adipocyte differentiation. Lysine 159 is modified (N6-acetyllysine; alternate). Lysine 159 participates in a covalent cross-link: Glycyl lysine isopeptide (Lys-Gly) (interchain with G-Cter in SUMO); alternate. Residue lysine 159 forms a Glycyl lysine isopeptide (Lys-Gly) (interchain with G-Cter in SUMO2); alternate linkage. Disordered regions lie at residues 176–195 (LFPY…ASPA) and 213–293 (TMHL…RERN). Residues 179-191 (YQPPPPPPPPHPH) show a composition bias toward pro residues. A required to functionally cooperate with SREBF1 in promoter activation region spans residues 180–194 (QPPPPPPPPHPHASP). Serine 193 is modified (phosphoserine). Pro residues predominate over residues 220–232 (HPTPPPTPVPSPH). Phosphothreonine; by GSK3 occurs at positions 222 and 226. At serine 230 the chain carries Phosphoserine; by GSK3. Residues 233–255 (AAPALGAAGLPGPGSALKGLAGA) show a composition bias toward low complexity. Residues 240–359 (AGLPGPGSAL…SLVKAMGNCA (120 aa)) form an interaction with FOXO1 region. The segment covering 261–272 (TGGGGGGSGAGA) has biased composition (gly residues). Positions 277 to 293 (KSVDKNSNEYRVRRERN) are enriched in basic and acidic residues. The region spanning 283–346 (SNEYRVRRER…DTLRGIFRQL (64 aa)) is the bZIP domain. Residues 286–301 (YRVRRERNNIAVRKSR) mediate DNA binding. The basic motif stretch occupies residues 287-314 (RVRRERNNIAVRKSRDKAKQRNVETQQK). The tract at residues 318-346 (LTSDNDRLRKRVEQLSRELDTLRGIFRQL) is leucine-zipper.

The protein belongs to the bZIP family. C/EBP subfamily. As to quaternary structure, binds DNA as a homodimer and as a heterodimer. Can form stable heterodimers with CEBPB, CEBPD, CEBPE and CEBPG. Interacts with PRDM16. Interacts with UBN1. Interacts with ZNF638; this interaction increases transcriptional activation. Interacts with the complex TFDP2:E2F1; the interaction prevents CEBPA binding to target gene promoters and represses its transcriptional activity. Interacts with RB1. Interacts (when phosphorylated at Ser-193) with CDK2, CDK4, E2F4 and SMARCA2. Interacts with SREBPF1. Interacts with FOXO1 (via the Fork-head domain); the interaction increases when FOXO1 is deacetylated. Interacts with SIX1. Interacts (via recognition sequence) with TRIB1. Interacts (via bZIP domain) with OVOL2 (via zinc-finger domains); the interaction inhibits the transcription factor activity of CEBPA and is required to repress adipogenesis. In terms of assembly, interacts with TAF1A and UBTF. Interacts with TAF1A and UBTF. Interacts with NPM1. Sumoylated, sumoylation blocks the inhibitory effect on cell proliferation by disrupting the interaction with SMARCA2. In terms of processing, phosphorylation at Ser-193 is required for interaction with CDK2, CDK4 and SWI/SNF complex leading to cell cycle inhibition. Dephosphorylated at Ser-193 by protein phosphatase 2A (PP2A) through PI3K/AKT signaling pathway regulation. Phosphorylation at Thr-222 and Thr-226 by GSK3 is constitutive in adipose tissue and lung. In liver, both Thr-222 and Thr-226 are phosphorylated only during feeding but not during fasting. Phosphorylation of the GSK3 consensus sites selectively decreases transactivation activity on IRE-controlled promoters. Post-translationally, ubiquitinated by COP1 upon interaction with TRIB1. In terms of tissue distribution, isoform 2 and isoform 3 are expressed in adipose tissue and liver (at protein level).

The protein localises to the nucleus. It is found in the nucleolus. In terms of biological role, transcription factor that coordinates proliferation arrest and the differentiation of myeloid progenitors, adipocytes, hepatocytes, and cells of the lung and the placenta. Binds directly to the consensus DNA sequence 5'-T[TG]NNGNAA[TG]-3' acting as an activator on distinct target genes. During early embryogenesis, plays essential and redundant functions with CEBPB. Essential for the transition from common myeloid progenitors (CMP) to granulocyte/monocyte progenitors (GMP). Critical for the proper development of the liver and the lung. Necessary for terminal adipocyte differentiation, is required for postnatal maintenance of systemic energy homeostasis and lipid storage. To regulate these different processes at the proper moment and tissue, interplays with other transcription factors and modulators. Down-regulates the expression of genes that maintain cells in an undifferentiated and proliferative state through E2F1 repression, which is critical for its ability to induce adipocyte and granulocyte terminal differentiation. Reciprocally E2F1 blocks adipocyte differentiation by binding to specific promoters and repressing CEBPA binding to its target gene promoters. Proliferation arrest also depends on a functional binding to SWI/SNF complex. In liver, regulates gluconeogenesis and lipogenesis through different mechanisms. To regulate gluconeogenesis, functionally cooperates with FOXO1 binding to IRE-controlled promoters and regulating the expression of target genes such as PCK1 or G6PC1. To modulate lipogenesis, interacts and transcriptionally synergizes with SREBF1 in promoter activation of specific lipogenic target genes such as ACAS2. In adipose tissue, seems to act as FOXO1 coactivator accessing to ADIPOQ promoter through FOXO1 binding sites. Its function is as follows. Can act as dominant-negative. Binds DNA and have transctivation activity, even if much less efficiently than isoform 2. Does not inhibit cell proliferation. Functionally, directly and specifically enhances ribosomal DNA transcription interacting with RNA polymerase I-specific cofactors and inducing histone acetylation. The chain is CCAAT/enhancer-binding protein alpha from Mus musculus (Mouse).